The sequence spans 547 residues: Glucose-6-phosphate isomerase (547 aa).

The active-site Proton donor is Glu-353. Residues His-384 and Lys-512 contribute to the active site.

Belongs to the GPI family.

It localises to the cytoplasm. It catalyses the reaction alpha-D-glucose 6-phosphate = beta-D-fructose 6-phosphate. Its pathway is carbohydrate biosynthesis; gluconeogenesis. The protein operates within carbohydrate degradation; glycolysis; D-glyceraldehyde 3-phosphate and glycerone phosphate from D-glucose: step 2/4. Catalyzes the reversible isomerization of glucose-6-phosphate to fructose-6-phosphate. This Pseudoalteromonas atlantica (strain T6c / ATCC BAA-1087) protein is Glucose-6-phosphate isomerase.